Here is a 1119-residue protein sequence, read N- to C-terminus: Synaptojanin (1119 aa).

In terms of domain architecture, SAC spans 119 to 438 (LQRLLSSQMF…GDQCSTIYAG (320 aa)). The interval 532 to 826 (GTWNVNGGKN…DRSELKTSDH (295 aa)) is catalytic. Disordered regions lie at residues 986–1005 (SLTL…ARSE) and 1042–1119 (EHVP…PKNM). The span at 1050 to 1072 (PQSNNNKSPPQACLFNPFTQSAP) shows a compositional bias: low complexity. 2 stretches are compositionally biased toward pro residues: residues 1073–1085 (SPAP…PLPP) and 1093–1119 (PGPP…PKNM).

Belongs to the synaptojanin family. This sequence in the central section; belongs to the inositol 1,4,5-trisphosphate 5-phosphatase family.

The protein resides in the cytoplasmic vesicle. Its subcellular location is the secretory vesicle. It localises to the synaptic vesicle. The protein localises to the synapse. The enzyme catalyses a 1,2-diacyl-sn-glycero-3-phospho-(1D-myo-inositol-4,5-bisphosphate) + H2O = a 1,2-diacyl-sn-glycero-3-phospho-(1D-myo-inositol 4-phosphate) + phosphate. Functionally, probable inositol 5-phosphatase which regulates synaptic vesicle recycling in neurons by regulating clathrin-mediated endocytosis. The protein is Synaptojanin of Caenorhabditis elegans.